A 616-amino-acid chain; its full sequence is Angiotensin-converting enzyme (616 aa).

The signal sequence occupies residues 1–23 (MNLINFSYLNLLFGAGLFSVLES). Positions 27-610 (LNTESDAKKW…PRAENWMGGK (584 aa)) constitute a Peptidase M2 domain. 2 N-linked (GlcNAc...) asparagine glycosylation sites follow: Asn61 and Asn96. A disulfide bridge connects residues Cys142 and Cys152. Residues Arg180 and Tyr218 each contribute to the chloride site. Asn303 is a glycosylation site (N-linked (GlcNAc...) asparagine). Cys345 and Cys363 form a disulfide bridge. His376 lines the Zn(2+) pocket. Residue Glu377 is the Proton acceptor of the active site. Positions 380 and 404 each coordinate Zn(2+). N-linked (GlcNAc...) asparagine glycosylation occurs at Asn428. 2 residues coordinate chloride: Trp478 and Arg482. The active-site Proton donor is the His506. Residue Arg515 participates in chloride binding. A disulfide bridge connects residues Cys531 and Cys543. 2 N-linked (GlcNAc...) asparagine glycosylation sites follow: Asn535 and Asn573.

The protein belongs to the peptidase M2 family. It depends on Zn(2+) as a cofactor. The cofactor is chloride. In terms of tissue distribution, epithelial cells of the midgut.

The protein resides in the secreted. It is found in the extracellular space. The catalysed reaction is Release of a C-terminal dipeptide, oligopeptide-|-Xaa-Yaa, when Xaa is not Pro, and Yaa is neither Asp nor Glu. Thus, conversion of angiotensin I to angiotensin II, with increase in vasoconstrictor activity, but no action on angiotensin II.. Its activity is regulated as follows. Activated by chloride. Inhibited by captopril and lisinopril, and to a lesser extent by delaprilat. In Theromyzon tessulatum (Duck leech), this protein is Angiotensin-converting enzyme (ACE).